The chain runs to 215 residues: uncharacterized protein (215 aa).

This sequence belongs to the mimivirus L31/R44 family.

This is an uncharacterized protein from Acanthamoeba polyphaga (Amoeba).